A 141-amino-acid polypeptide reads, in one-letter code: Envelope glycoprotein L (141 aa).

Residues 1–19 (MKWLLGAYVCLCLANILNA) form the signal peptide. Residues 21-131 (IPNPCCNVFA…TSAIKFKSKY (111 aa)) are interaction with gH.

The protein belongs to the herpesviridae glycoprotein L family. In terms of assembly, interacts with glycoprotein H (gH); this interaction is necessary for the correct processing and cell surface expression of gH. The heterodimer gH/gL seems to interact with gB trimers during fusion.

The protein localises to the virion membrane. It is found in the host cell membrane. It localises to the host Golgi apparatus. Its subcellular location is the host trans-Golgi network. Its function is as follows. The heterodimer glycoprotein H-glycoprotein L is required for the fusion of viral and plasma membranes leading to virus entry into the host cell. Acts as a functional inhibitor of gH and maintains gH in an inhibited form. Upon binding to host integrins, gL dissociates from gH leading to activation of the viral fusion glycoproteins gB and gH. This is Envelope glycoprotein L from Saimiriine herpesvirus 2 (strain 11) (SaHV-2).